Here is a 131-residue protein sequence, read N- to C-terminus: ATP synthase lipid-binding protein, mitochondrial (131 aa).

Residues 1 to 56 constitute a mitochondrion transit peptide; sequence MLSAARLIAPAARSAIFSNAAVVRPLAAVSTQTQLVPAAPAQLSAVRSFQTTSVTK. Residues 72–92 traverse the membrane as a helical segment; it reads VGVAGSGAGIGTVFGSLIIGY. N6,N6,N6-trimethyllysine is present on lysine 99. The chain crosses the membrane as a helical span at residues 107 to 127; that stretch reads ILGFALSEAMGLFCLMMAFLL.

Belongs to the ATPase C chain family. F-type ATPases have 2 components, CF(1) - the catalytic core - and CF(0) - the membrane proton channel. CF(1) has five subunits: alpha(3), beta(3), gamma(1), delta(1), epsilon(1). CF(0) has three main subunits: a, b and c. Post-translationally, trimethylated by ATPSCKMT at Lys-99. Methylation may be required for proper incorporation of the C subunit into the ATP synthase complex and mitochondrial respiration.

Its subcellular location is the mitochondrion membrane. Mitochondrial membrane ATP synthase (F(1)F(0) ATP synthase or Complex V) produces ATP from ADP in the presence of a proton gradient across the membrane which is generated by electron transport complexes of the respiratory chain. F-type ATPases consist of two structural domains, F(1) - containing the extramembraneous catalytic core and F(0) - containing the membrane proton channel, linked together by a central stalk and a peripheral stalk. During catalysis, ATP synthesis in the catalytic domain of F(1) is coupled via a rotary mechanism of the central stalk subunits to proton translocation. Part of the complex F(0) domain. A homomeric c-ring of probably 10 subunits is part of the complex rotary element. This chain is ATP synthase lipid-binding protein, mitochondrial, found in Manduca sexta (Tobacco hawkmoth).